The following is a 217-amino-acid chain: Homologous-pairing protein 2 homolog (217 aa).

Positions 84-152 form a coiled coil; it reads ADLHGLDASI…RLKNIKAATN (69 aa). The interval 118–182 is DNA-binding; the sequence is TSALTTPEMQ…WRKRKRMTTE (65 aa).

Belongs to the HOP2 family. Interacts with the DNA-binding domain of the nuclear receptors NR3C1/GR, ESR2/ER-beta, THRB and RXRA. Forms a stable heterodimer with MND1. Interacts with PSMC3/TBP1. Phosphorylated by PKA, PKC and MAPK. Highly expressed in testis and more specifically in spermatocytes. Detected in spleen, ovary and thymus.

The protein localises to the nucleus. Functionally, plays an important role in meiotic recombination. Stimulates DMC1-mediated strand exchange required for pairing homologous chromosomes during meiosis. The complex PSMC3IP/MND1 binds DNA, stimulates the recombinase activity of DMC1 as well as DMC1 D-loop formation from double-strand DNA. This complex stabilizes presynaptic RAD51 and DMC1 filaments formed on single strand DNA to capture double-strand DNA. This complex stimulates both synaptic and presynaptic critical steps in RAD51 and DMC1-promoted homologous pairing. May inhibit HIV-1 viral protein TAT activity and modulate the activity of proteasomes through association with PSMC3. The protein is Homologous-pairing protein 2 homolog (Psmc3ip) of Mus musculus (Mouse).